The following is a 72-amino-acid chain: Translation initiation factor IF-1 (72 aa).

The S1-like domain maps to 1-72; sequence MSKDDSIEFE…TKGRITYRMK (72 aa).

The protein belongs to the IF-1 family. Component of the 30S ribosomal translation pre-initiation complex which assembles on the 30S ribosome in the order IF-2 and IF-3, IF-1 and N-formylmethionyl-tRNA(fMet); mRNA recruitment can occur at any time during PIC assembly.

Its subcellular location is the cytoplasm. One of the essential components for the initiation of protein synthesis. Stabilizes the binding of IF-2 and IF-3 on the 30S subunit to which N-formylmethionyl-tRNA(fMet) subsequently binds. Helps modulate mRNA selection, yielding the 30S pre-initiation complex (PIC). Upon addition of the 50S ribosomal subunit IF-1, IF-2 and IF-3 are released leaving the mature 70S translation initiation complex. This chain is Translation initiation factor IF-1, found in Xanthomonas euvesicatoria pv. vesicatoria (strain 85-10) (Xanthomonas campestris pv. vesicatoria).